The sequence spans 137 residues: Envelope glycoprotein L (137 aa).

Positions 1 to 25 (MRTVGVFLATCLVTIFVLPTWGNWA) are cleaved as a signal peptide. Positions 23–128 (NWAYPCCHVT…SVEDLFGANL (106 aa)) are interaction with gH. 2 disulfides stabilise this stretch: C28–C56 and C29–C79.

This sequence belongs to the herpesviridae glycoprotein L family. In terms of assembly, interacts with glycoprotein H (gH); this interaction is necessary for the correct processing and cell surface expression of gH. The heterodimer gH/gL seems to interact with gB trimers during fusion. The heterodimer gH/gL interacts with host EPHA2 to facilitate virus internalization and fusion.

The protein localises to the virion membrane. It is found in the host cell membrane. The protein resides in the host Golgi apparatus. Its subcellular location is the host trans-Golgi network. Functionally, the heterodimer glycoprotein H-glycoprotein L is required for the fusion of viral and plasma membranes leading to virus entry into the host cell. Acts as a functional inhibitor of gH and maintains gH in an inhibited form. Upon binding to host integrins, gL dissociates from gH leading to activation of the viral fusion glycoproteins gB and gH. The heterodimer gH/gL targets also host EPHA2 to promote viral entry. The protein is Envelope glycoprotein L of Epstein-Barr virus (strain AG876) (HHV-4).